The chain runs to 466 residues: Glutamate decarboxylase (466 aa).

At K277 the chain carries N6-(pyridoxal phosphate)lysine.

The protein belongs to the group II decarboxylase family. Pyridoxal 5'-phosphate serves as cofactor.

The catalysed reaction is L-glutamate + H(+) = 4-aminobutanoate + CO2. Functionally, converts internalized glutamate to GABA and increases the internal pH. Involved in glutamate-dependent acid resistance. The polypeptide is Glutamate decarboxylase (gadB) (Lactococcus lactis subsp. cremoris (strain MG1363)).